A 367-amino-acid polypeptide reads, in one-letter code: Serine/threonine-protein phosphatase 2A activator 2 (367 aa).

The protein belongs to the PTPA-type PPIase family.

It is found in the cytoplasm. The catalysed reaction is [protein]-peptidylproline (omega=180) = [protein]-peptidylproline (omega=0). Its function is as follows. PPIases accelerate the folding of proteins. It catalyzes the cis-trans isomerization of proline imidic peptide bonds in oligopeptides. Acts as a regulatory subunit for PP2A-like phosphatases modulating their activity or substrate specificity, probably by inducing a conformational change in the catalytic subunit, a direct target of the PPIase. Can reactivate inactive phosphatase PP2A-phosphatase methylesterase complexes (PP2Ai) in presence of ATP and Mg(2+) by dissociating the inactive form from the complex. This Debaryomyces hansenii (strain ATCC 36239 / CBS 767 / BCRC 21394 / JCM 1990 / NBRC 0083 / IGC 2968) (Yeast) protein is Serine/threonine-protein phosphatase 2A activator 2 (RRD2).